Reading from the N-terminus, the 240-residue chain is tRNA (guanine-N(1)-)-methyltransferase (240 aa).

Residues Gly110 and 129 to 134 contribute to the S-adenosyl-L-methionine site; that span reads LGDFVL.

This sequence belongs to the RNA methyltransferase TrmD family. As to quaternary structure, homodimer.

It is found in the cytoplasm. The enzyme catalyses guanosine(37) in tRNA + S-adenosyl-L-methionine = N(1)-methylguanosine(37) in tRNA + S-adenosyl-L-homocysteine + H(+). Its function is as follows. Specifically methylates guanosine-37 in various tRNAs. In Clostridium botulinum (strain Langeland / NCTC 10281 / Type F), this protein is tRNA (guanine-N(1)-)-methyltransferase.